The sequence spans 361 residues: Chorismate synthase (361 aa).

NADP(+)-binding residues include Arg-48 and Arg-54. FMN is bound by residues 131 to 133 (RSS), 243 to 244 (NA), Gly-287, 302 to 306 (KPTSS), and Arg-328.

It belongs to the chorismate synthase family. Homotetramer. The cofactor is FMNH2.

It catalyses the reaction 5-O-(1-carboxyvinyl)-3-phosphoshikimate = chorismate + phosphate. It participates in metabolic intermediate biosynthesis; chorismate biosynthesis; chorismate from D-erythrose 4-phosphate and phosphoenolpyruvate: step 7/7. Its function is as follows. Catalyzes the anti-1,4-elimination of the C-3 phosphate and the C-6 proR hydrogen from 5-enolpyruvylshikimate-3-phosphate (EPSP) to yield chorismate, which is the branch point compound that serves as the starting substrate for the three terminal pathways of aromatic amino acid biosynthesis. This reaction introduces a second double bond into the aromatic ring system. In Rhodopseudomonas palustris (strain HaA2), this protein is Chorismate synthase.